We begin with the raw amino-acid sequence, 83 residues long: MSSGGLLLLLGLLTLWEILTPVSSKDHPEFCELPADSGPCRGILHAFYYHPVHRTCLEFIYGGCYGNANNFKTIDECKRTCAA.

Positions M1–S24 are cleaved as a signal peptide. In terms of domain architecture, BPTI/Kunitz inhibitor spans C31–C81. 3 cysteine pairs are disulfide-bonded: C31/C81, C40/C64, and C56/C77.

The protein belongs to the venom Kunitz-type family. Expressed by the venom gland.

Its subcellular location is the secreted. Serine protease inhibitor. This chain is Kunitz-type serine protease inhibitor carinatin-2, found in Tropidechis carinatus (Australian rough-scaled snake).